A 714-amino-acid chain; its full sequence is K(+)-insensitive pyrophosphate-energized proton pump (714 aa).

The first 20 residues, methionine 1–alanine 20, serve as a signal peptide directing secretion. 4 consecutive transmembrane segments (helical) span residues leucine 52–leucine 74, glycine 85–leucine 105, isoleucine 128–leucine 148, and valine 166–phenylalanine 186. Position 188 (lysine 188) interacts with substrate. The Mg(2+) site is built by aspartate 191, aspartate 195, asparagine 218, and aspartate 221. 6 consecutive transmembrane segments (helical) span residues alanine 238–leucine 258, valine 263–valine 283, glycine 298–valine 318, glycine 333–isoleucine 353, glycine 383–isoleucine 403, and leucine 411–leucine 431. Aspartate 439 contributes to the Mg(2+) binding site. Helical transmembrane passes span alanine 470 to alanine 490, tyrosine 522 to methionine 542, valine 591 to isoleucine 611, and alanine 618 to isoleucine 638. Residues aspartate 648, aspartate 680, and aspartate 684 each coordinate Ca(2+). Substrate is bound at residue lysine 687. A helical membrane pass occupies residues alanine 693–alanine 713.

Belongs to the H(+)-translocating pyrophosphatase (TC 3.A.10) family. K(+)-insensitive subfamily. Homodimer. Mg(2+) is required as a cofactor.

The protein localises to the acidocalcisome membrane. The catalysed reaction is diphosphate + H2O + H(+)(in) = 2 phosphate + 2 H(+)(out). In terms of biological role, proton pump that utilizes the energy of pyrophosphate hydrolysis as the driving force for proton movement across the membrane. Generates a proton motive force. In Agrobacterium fabrum (strain C58 / ATCC 33970) (Agrobacterium tumefaciens (strain C58)), this protein is K(+)-insensitive pyrophosphate-energized proton pump.